The chain runs to 153 residues: Cornifin-B (153 aa).

Disordered regions lie at residues 1–35 (MSSH…PCVS) and 49–85 (CHPK…HPKA). A run of 14 repeats spans residues 27–34 (PPPPEPCV), 35–42 (SQVKTPCD), 43–50 (TKVPEPCH), 51–58 (PKAPEPCH), 59–66 (PKAPEPCH), 67–74 (PKAPEPCH), 75–82 (PKAPEPCH), 83–90 (PKAPEPCH), 91–98 (PKAPEPCH), 99–106 (PKAPEPCH), 107–114 (PKAPEPCH), 115–122 (PKVPEPCL), 123–130 (PKAPEPCQ), and 131–138 (PIVPEPCP). The interval 27–138 (PPPPEPCVSQ…CQPIVPEPCP (112 aa)) is 14 X 8 AA approximate tandem repeats.

It belongs to the cornifin (SPRR) family. As to expression, expressed in fetal periderm, hair follicles and in the thickened epidermis of the lip and footpad. Also present in the epithelia of various tissues such as the penis, vagina, forestomach, tongue and esophagus.

The protein localises to the cytoplasm. Cross-linked envelope protein of keratinocytes. It is a keratinocyte protein that first appears in the cell cytosol, but ultimately becomes cross-linked to membrane proteins by transglutaminase. All that results in the formation of an insoluble envelope beneath the plasma membrane. The polypeptide is Cornifin-B (Sprr1b) (Mus musculus (Mouse)).